The chain runs to 267 residues: 4-hydroxy-tetrahydrodipicolinate reductase (267 aa).

NAD(+) is bound at residue 8-13 (GASGRM). Residue Arg35 participates in NADP(+) binding. Residues 98–100 (GTT) and 122–125 (APNM) each bind NAD(+). The active-site Proton donor/acceptor is the His155. Residue His156 coordinates (S)-2,3,4,5-tetrahydrodipicolinate. The active-site Proton donor is the Lys159. 165-166 (GT) contacts (S)-2,3,4,5-tetrahydrodipicolinate.

This sequence belongs to the DapB family.

The protein resides in the cytoplasm. The enzyme catalyses (S)-2,3,4,5-tetrahydrodipicolinate + NAD(+) + H2O = (2S,4S)-4-hydroxy-2,3,4,5-tetrahydrodipicolinate + NADH + H(+). The catalysed reaction is (S)-2,3,4,5-tetrahydrodipicolinate + NADP(+) + H2O = (2S,4S)-4-hydroxy-2,3,4,5-tetrahydrodipicolinate + NADPH + H(+). Its pathway is amino-acid biosynthesis; L-lysine biosynthesis via DAP pathway; (S)-tetrahydrodipicolinate from L-aspartate: step 4/4. Catalyzes the conversion of 4-hydroxy-tetrahydrodipicolinate (HTPA) to tetrahydrodipicolinate. The polypeptide is 4-hydroxy-tetrahydrodipicolinate reductase (Hahella chejuensis (strain KCTC 2396)).